Reading from the N-terminus, the 154-residue chain is Ascorbate-specific PTS system EIIA component (154 aa).

The 145-residue stretch at 6 to 150 (SLAENNSIRL…QEVLDLIDRT (145 aa)) folds into the PTS EIIA type-2 domain. The Tele-phosphohistidine intermediate role is filled by H68. H68 bears the Phosphohistidine mark.

The protein localises to the cytoplasm. Its function is as follows. The phosphoenolpyruvate-dependent sugar phosphotransferase system (sugar PTS), a major carbohydrate active transport system, catalyzes the phosphorylation of incoming sugar substrates concomitantly with their translocation across the cell membrane. The enzyme II UlaABC PTS system is involved in ascorbate transport. The chain is Ascorbate-specific PTS system EIIA component (ulaC) from Salmonella paratyphi A (strain ATCC 9150 / SARB42).